The sequence spans 945 residues: Valine--tRNA ligase (945 aa).

The 'HIGH' region motif lies at 42–52 (PNVTGTLHMGH). The short motif at 552 to 556 (KMSKS) is the 'KMSKS' region element. Lys555 is an ATP binding site. Positions 879-945 (DKAAETARLS…VQNQLAKLKD (67 aa)) form a coiled coil.

Belongs to the class-I aminoacyl-tRNA synthetase family. ValS type 1 subfamily. In terms of assembly, monomer.

The protein localises to the cytoplasm. It catalyses the reaction tRNA(Val) + L-valine + ATP = L-valyl-tRNA(Val) + AMP + diphosphate. Its function is as follows. Catalyzes the attachment of valine to tRNA(Val). As ValRS can inadvertently accommodate and process structurally similar amino acids such as threonine, to avoid such errors, it has a 'posttransfer' editing activity that hydrolyzes mischarged Thr-tRNA(Val) in a tRNA-dependent manner. The sequence is that of Valine--tRNA ligase from Neisseria gonorrhoeae (strain ATCC 700825 / FA 1090).